An 816-amino-acid polypeptide reads, in one-letter code: Endo-acting ulvan lyase (816 aa).

Positions 1-23 (MGTSVRRISVVLMMLFGTNFCWS) are cleaved as a signal peptide.

It belongs to the polysaccharide lyase family.

The protein localises to the cell surface. Its subcellular location is the periplasm. Functionally, ulvan lyase involved in ulvan degradation. Ulvan is the main polysaccharide component of the Ulvales (green seaweed) cell wall. It is composed of disaccharide building blocks comprising 3-sulfated rhamnose (Rha3S) linked to D-glucuronic acid (GlcA), L-iduronic acid (IduA), or D-xylose (Xyl). Ulvan lyase catalyzes the endolytic cleavage of the glycosidic bond between Rha3S and the uronic acids GlcA or IduA, producing oligosaccharides that have unsaturated 4-deoxy-L-threo-hex-4-enopyranosiduronic acid (deltaUA) at the non-reducing end. This results eventually in the degradation of the ulvan polysaccharide into deltaUA-Rha3S disaccharides and deltaUA-Rha3S-Xyl-Rha3S tetrasaccharides. The sequence is that of Endo-acting ulvan lyase from Formosa agariphila (strain DSM 15362 / KCTC 12365 / LMG 23005 / KMM 3901 / M-2Alg 35-1).